The sequence spans 173 residues: MSAPRIGVLALQGDTREHLAALREAGAESMPVRRRGELEAVDGLVIPGGESTTMSHLLKDLDLLEPLRGLLADGLPAYGACAGMILLASEILDAGAGGREALPLRAIDMTVRRNAFGRQVDSFEGDIAFAGLDGPVRAVFIRAPWVERAGDGVEVLARAAGHVVAVAGIEPDA.

Gly-49 to Ser-51 is a binding site for L-glutamine. Residue Cys-81 is the Nucleophile of the active site. Residues Arg-113 and Ile-141–Arg-142 each bind L-glutamine.

It belongs to the glutaminase PdxT/SNO family. As to quaternary structure, in the presence of PdxS, forms a dodecamer of heterodimers. Only shows activity in the heterodimer.

The catalysed reaction is aldehydo-D-ribose 5-phosphate + D-glyceraldehyde 3-phosphate + L-glutamine = pyridoxal 5'-phosphate + L-glutamate + phosphate + 3 H2O + H(+). The enzyme catalyses L-glutamine + H2O = L-glutamate + NH4(+). It functions in the pathway cofactor biosynthesis; pyridoxal 5'-phosphate biosynthesis. Catalyzes the hydrolysis of glutamine to glutamate and ammonia as part of the biosynthesis of pyridoxal 5'-phosphate. The resulting ammonia molecule is channeled to the active site of PdxS. The polypeptide is Pyridoxal 5'-phosphate synthase subunit PdxT (Mycolicibacterium paratuberculosis (strain ATCC BAA-968 / K-10) (Mycobacterium paratuberculosis)).